The following is a 59-amino-acid chain: uncharacterized protein (59 aa).

The N-terminal stretch at 1–17 is a signal peptide; that stretch reads MIASIWYAELGCASAIA.

This is an uncharacterized protein from Rickettsia prowazekii (strain Madrid E).